We begin with the raw amino-acid sequence, 370 residues long: Ni-sirohydrochlorin a,c-diamide reductive cyclase complex, component CfbD (370 aa).

The protein belongs to the NifD/NifK/NifE/NifN family. Homodimer or monomer. The Ni-sirohydrochlorin a,c-diamide reductive cyclase complex is composed of a NifH homolog component CfbC and a NifD homolog component CfbD. It depends on [4Fe-4S] cluster as a cofactor.

It catalyses the reaction Ni-sirohydrochlorin a,c-diamide + 3 AH2 + ATP + H2O = 15,17(3)-seco-F430-17(3)-acid + 3 A + ADP + phosphate. In terms of biological role, involved in the biosynthesis of the unique nickel-containing tetrapyrrole coenzyme F430, the prosthetic group of methyl-coenzyme M reductase (MCR), which plays a key role in methanogenesis and anaerobic methane oxidation. Catalyzes both the six-electron reduction of the tetrahydroporphyrin ring system and the gamma-lactamization of the c-acetamide side chain of Ni-sirohydrochlorin a,c-diamide to yield 15,17(3)-seco-F430-17(3)-acid (seco-F430), the last intermediate in the biosynthesis of the coenzyme F430. The sequence is that of Ni-sirohydrochlorin a,c-diamide reductive cyclase complex, component CfbD from Methanosarcina acetivorans (strain ATCC 35395 / DSM 2834 / JCM 12185 / C2A).